The primary structure comprises 195 residues: ATP-dependent Clp protease proteolytic subunit (195 aa).

Ser97 functions as the Nucleophile in the catalytic mechanism. His122 is a catalytic residue.

Belongs to the peptidase S14 family. Fourteen ClpP subunits assemble into 2 heptameric rings which stack back to back to give a disk-like structure with a central cavity, resembling the structure of eukaryotic proteasomes.

The protein resides in the cytoplasm. It catalyses the reaction Hydrolysis of proteins to small peptides in the presence of ATP and magnesium. alpha-casein is the usual test substrate. In the absence of ATP, only oligopeptides shorter than five residues are hydrolyzed (such as succinyl-Leu-Tyr-|-NHMec, and Leu-Tyr-Leu-|-Tyr-Trp, in which cleavage of the -Tyr-|-Leu- and -Tyr-|-Trp bonds also occurs).. Cleaves peptides in various proteins in a process that requires ATP hydrolysis. Has a chymotrypsin-like activity. Plays a major role in the degradation of misfolded proteins. The polypeptide is ATP-dependent Clp protease proteolytic subunit (Campylobacter hominis (strain ATCC BAA-381 / DSM 21671 / CCUG 45161 / LMG 19568 / NCTC 13146 / CH001A)).